An 86-amino-acid chain; its full sequence is Large ribosomal subunit protein uL23 (86 aa).

It belongs to the universal ribosomal protein uL23 family. As to quaternary structure, part of the 50S ribosomal subunit. Contacts protein L29.

Its function is as follows. Binds to 23S rRNA. One of the proteins that surrounds the polypeptide exit tunnel on the outside of the ribosome. In Aeropyrum pernix (strain ATCC 700893 / DSM 11879 / JCM 9820 / NBRC 100138 / K1), this protein is Large ribosomal subunit protein uL23.